The chain runs to 144 residues: Large ribosomal subunit protein uL13 (144 aa).

The protein belongs to the universal ribosomal protein uL13 family. As to quaternary structure, part of the 50S ribosomal subunit.

In terms of biological role, this protein is one of the early assembly proteins of the 50S ribosomal subunit, although it is not seen to bind rRNA by itself. It is important during the early stages of 50S assembly. The polypeptide is Large ribosomal subunit protein uL13 (Clostridium kluyveri (strain NBRC 12016)).